A 309-amino-acid polypeptide reads, in one-letter code: Succinate--CoA ligase [ADP-forming] subunit alpha-2, mitochondrial (309 aa).

A hydrogenosome-targeting transit peptide spans 1-9 (MLSSSFERN). CoA contacts are provided by residues Lys-54 and 107 to 109 (ITE). Residue Tyr-171 participates in substrate binding. His-262 functions as the Tele-phosphohistidine intermediate in the catalytic mechanism.

This sequence belongs to the succinate/malate CoA ligase alpha subunit family. Heterodimer of an alpha and a beta subunit.

It is found in the hydrogenosome lumen. The catalysed reaction is succinate + ATP + CoA = succinyl-CoA + ADP + phosphate. Its pathway is carbohydrate metabolism; tricarboxylic acid cycle; succinate from succinyl-CoA (ligase route): step 1/1. In terms of biological role, succinyl-CoA synthetase functions in the citric acid cycle (TCA), coupling the hydrolysis of succinyl-CoA to the synthesis of ATP and thus represents the only step of substrate-level phosphorylation in the TCA. The alpha subunit of the enzyme binds the substrates coenzyme A and phosphate, while succinate binding and nucleotide specificity is provided by the beta subunit. The sequence is that of Succinate--CoA ligase [ADP-forming] subunit alpha-2, mitochondrial (ALPHA-SCS2) from Trichomonas vaginalis.